The chain runs to 192 residues: 3-hydroxyanthranilate 3,4-dioxygenase 1 (192 aa).

Arg50 serves as a coordination point for O2. Residues His54, Glu60, and His102 each contribute to the Fe cation site. Glu60 lines the substrate pocket. Substrate contacts are provided by Arg106 and Glu116. The a divalent metal cation site is built by Cys131, Cys134, Cys168, and Cys171.

The protein belongs to the 3-HAO family. Fe(2+) is required as a cofactor.

It is found in the cytoplasm. The enzyme catalyses 3-hydroxyanthranilate + O2 = (2Z,4Z)-2-amino-3-carboxymuconate 6-semialdehyde. It functions in the pathway cofactor biosynthesis; NAD(+) biosynthesis; quinolinate from L-kynurenine: step 3/3. In terms of biological role, catalyzes the oxidative ring opening of 3-hydroxyanthranilate to 2-amino-3-carboxymuconate semialdehyde, which spontaneously cyclizes to quinolinate. The chain is 3-hydroxyanthranilate 3,4-dioxygenase 1 (bna1-1) from Aspergillus clavatus (strain ATCC 1007 / CBS 513.65 / DSM 816 / NCTC 3887 / NRRL 1 / QM 1276 / 107).